The primary structure comprises 394 residues: Elongation factor Tu 2 (394 aa).

The 195-residue stretch at 10 to 204 (KPHVNVGTIG…ALDSYIPEPE (195 aa)) folds into the tr-type G domain. Residues 19 to 26 (GHVDHGKT) form a G1 region. 19–26 (GHVDHGKT) is a GTP binding site. T26 is a Mg(2+) binding site. Residues 60–64 (GITIN) form a G2 region. The interval 81–84 (DCPG) is G3. GTP is bound by residues 81 to 85 (DCPGH) and 136 to 139 (NKCD). The segment at 136–139 (NKCD) is G4. Residues 174–176 (SAL) form a G5 region.

It belongs to the TRAFAC class translation factor GTPase superfamily. Classic translation factor GTPase family. EF-Tu/EF-1A subfamily. As to quaternary structure, monomer.

The protein localises to the cytoplasm. It catalyses the reaction GTP + H2O = GDP + phosphate + H(+). Its function is as follows. GTP hydrolase that promotes the GTP-dependent binding of aminoacyl-tRNA to the A-site of ribosomes during protein biosynthesis. This chain is Elongation factor Tu 2, found in Shewanella oneidensis (strain ATCC 700550 / JCM 31522 / CIP 106686 / LMG 19005 / NCIMB 14063 / MR-1).